We begin with the raw amino-acid sequence, 126 residues long: Fatty acid-binding protein, liver (126 aa).

A2 carries the N-acetylalanine modification. Cholate-binding residues include K77, H99, and Q101.

The protein belongs to the calycin superfamily. Fatty-acid binding protein (FABP) family.

It is found in the cytoplasm. Binds free fatty acids and their coenzyme A derivatives, bilirubin, and some other small molecules in the cytoplasm. May be involved in intracellular lipid transport. This chain is Fatty acid-binding protein, liver (fabp1), found in Aquarana catesbeiana (American bullfrog).